A 550-amino-acid polypeptide reads, in one-letter code: M-phase inducer phosphatase 1-B (550 aa).

Disordered regions lie at residues 76–98 and 285–335; these read NLGDETAPLPTESPDRISSGKVE and SPSM…QRRG. Residues 290–310 are compositionally biased toward basic and acidic residues; it reads EKLDRPMLKRPVRPLDSETPV. Over residues 322–335 the composition is skewed to polar residues; that stretch reads LQPQEENFQPQRRG. Residues 401–508 form the Rhodanese domain; that stretch reads LVEKIFIIDC…FFPEYKELCE (108 aa). C457 is a catalytic residue.

This sequence belongs to the MPI phosphatase family.

It carries out the reaction O-phospho-L-tyrosyl-[protein] + H2O = L-tyrosyl-[protein] + phosphate. In terms of biological role, tyrosine protein phosphatase which functions as a dosage-dependent inducer of mitotic progression. Directly dephosphorylates CDK1 and stimulates its kinase activity. This Xenopus laevis (African clawed frog) protein is M-phase inducer phosphatase 1-B (cdc25-1-b).